Here is a 1017-residue protein sequence, read N- to C-terminus: Putative calcium-transporting ATPase 13, plasma membrane-type (1017 aa).

The residue at position 1 (M1) is an N-acetylmethionine. At 1 to 147 the chain is on the cytoplasmic side; sequence MRRNVSDHAE…NTYTRQPSKG (147 aa). Residues 20–31 are interaction with calmodulin; the sequence is LLELPKTLSKSN. The helical transmembrane segment at 148–168 threads the bilayer; it reads LFHFVVEAFKDLTILILLGCA. Residues 169 to 186 are Lumenal-facing; the sequence is TLSLGFGIKEHGLKEGWY. The helical transmembrane segment at 187–207 threads the bilayer; the sequence is DGGSIFVAVFLVVAVSAVSNF. Topologically, residues 208–336 are cytoplasmic; that stretch reads RQNRQFDKLS…NEQTPLQSRL (129 aa). Residues 337-356 traverse the membrane as a helical segment; it reads DKLTSSIGKVGLLVAFLVLL. The Lumenal portion of the chain corresponds to 357 to 393; it reads VLLIRYFTGTTKDESGNREYNGKTTKSDEIVNAVVKM. The helical transmembrane segment at 394-411 threads the bilayer; sequence VAAAVTIIVVAIPEGLPL. Topologically, residues 412–802 are cytoplasmic; the sequence is AVTLTLAYSM…KWGRCVYNNI (391 aa). The 4-aspartylphosphate intermediate role is filled by D449. The Mg(2+) site is built by D747 and D751. Residues 803–821 form a helical membrane-spanning segment; the sequence is QKFIQFQLTVNVAALVINF. Topologically, residues 822–832 are lumenal; that stretch reads VAAVSAGDVPL. A helical transmembrane segment spans residues 833–853; sequence TAVQLLWVNLIMDTLGALALA. At 854-873 the chain is on the cytoplasmic side; it reads TEKPTNDLMKKKPIGRVAPL. The helical transmembrane segment at 874–896 threads the bilayer; that stretch reads ITNIMWRNLLAQAFYQISVLLVL. Residues 897 to 905 are Lumenal-facing; sequence QFRGRSIFN. Residues 906 to 926 form a helical membrane-spanning segment; sequence VTEKVKNTLIFNTFVLCQVFN. Residues 927–944 are Cytoplasmic-facing; sequence EFNARSLEKKNVFKGLHK. The helical transmembrane segment at 945–966 threads the bilayer; sequence NRLFIGIIVVTVVLQVVMVEFL. The Lumenal portion of the chain corresponds to 967–976; the sequence is KRFADTERLN. The chain crosses the membrane as a helical span at residues 977-998; that stretch reads LGQWGVCIAIAAASWPIGWLVK. Residues 999 to 1002 are Cytoplasmic-facing; that stretch reads SVPV.

Belongs to the cation transport ATPase (P-type) (TC 3.A.3) family. Type IIB subfamily.

It is found in the membrane. The catalysed reaction is Ca(2+)(in) + ATP + H2O = Ca(2+)(out) + ADP + phosphate + H(+). Activated by calmodulin. Functionally, this magnesium-dependent enzyme catalyzes the hydrolysis of ATP coupled with the translocation of calcium from the cytosol out of the cell or into organelles. This Arabidopsis thaliana (Mouse-ear cress) protein is Putative calcium-transporting ATPase 13, plasma membrane-type (ACA13).